The chain runs to 340 residues: Putative methionyl-tRNA formyltransferase (340 aa).

This sequence belongs to the Fmt family.

It localises to the mitochondrion. Its subcellular location is the mitochondrion matrix. The protein resides in the cytoplasm. The enzyme catalyses L-methionyl-tRNA(fMet) + (6R)-10-formyltetrahydrofolate = N-formyl-L-methionyl-tRNA(fMet) + (6S)-5,6,7,8-tetrahydrofolate + H(+). Functionally, formylates methionyl-tRNA in mitochondria and the cytoplasm. Responsible for the formylation of the N-terminally formylated (Nt-formylated) mitochondrial matrix proteins that are encoded by mitochondrial DNA. Nt-formylated proteins in the cytoplasm are strongly up-regulated in stationary phase or upon starvation for specific amino acids and are targeted for degradation by an E3 ubiquitin ligase-mediated fMet/N-end rule pathway. Increased Nt-formylation of cytosolic proteins appears to be important for adaptation to these stresses. The protein is Putative methionyl-tRNA formyltransferase (fmt1) of Schizosaccharomyces pombe (strain 972 / ATCC 24843) (Fission yeast).